The chain runs to 479 residues: Aspartyl/glutamyl-tRNA(Asn/Gln) amidotransferase subunit B (479 aa).

It belongs to the GatB/GatE family. GatB subfamily. As to quaternary structure, heterotrimer of A, B and C subunits.

The enzyme catalyses L-glutamyl-tRNA(Gln) + L-glutamine + ATP + H2O = L-glutaminyl-tRNA(Gln) + L-glutamate + ADP + phosphate + H(+). The catalysed reaction is L-aspartyl-tRNA(Asn) + L-glutamine + ATP + H2O = L-asparaginyl-tRNA(Asn) + L-glutamate + ADP + phosphate + 2 H(+). Allows the formation of correctly charged Asn-tRNA(Asn) or Gln-tRNA(Gln) through the transamidation of misacylated Asp-tRNA(Asn) or Glu-tRNA(Gln) in organisms which lack either or both of asparaginyl-tRNA or glutaminyl-tRNA synthetases. The reaction takes place in the presence of glutamine and ATP through an activated phospho-Asp-tRNA(Asn) or phospho-Glu-tRNA(Gln). The sequence is that of Aspartyl/glutamyl-tRNA(Asn/Gln) amidotransferase subunit B from Halorhodospira halophila (strain DSM 244 / SL1) (Ectothiorhodospira halophila (strain DSM 244 / SL1)).